Consider the following 337-residue polypeptide: Dihydroorotate dehydrogenase (quinone) (337 aa).

FMN-binding positions include 62–66 (AGLDK) and Thr-86. A substrate-binding site is contributed by Lys-66. Residue 111 to 115 (NRFGF) coordinates substrate. FMN is bound by residues Asn-139 and Asn-172. Position 172 (Asn-172) interacts with substrate. Ser-175 functions as the Nucleophile in the catalytic mechanism. Asn-177 lines the substrate pocket. FMN contacts are provided by Lys-217 and Thr-245. A substrate-binding site is contributed by 246–247 (NT). Residues Gly-268, Gly-297, and 318–319 (YS) contribute to the FMN site.

This sequence belongs to the dihydroorotate dehydrogenase family. Type 2 subfamily. Monomer. It depends on FMN as a cofactor.

It is found in the cell membrane. It carries out the reaction (S)-dihydroorotate + a quinone = orotate + a quinol. It participates in pyrimidine metabolism; UMP biosynthesis via de novo pathway; orotate from (S)-dihydroorotate (quinone route): step 1/1. Its function is as follows. Catalyzes the conversion of dihydroorotate to orotate with quinone as electron acceptor. The polypeptide is Dihydroorotate dehydrogenase (quinone) (Methylobacillus flagellatus (strain ATCC 51484 / DSM 6875 / VKM B-1610 / KT)).